The chain runs to 166 residues: Cyclin-dependent kinase 4 inhibitor D (166 aa).

Methionine 1 carries the post-translational modification N-acetylmethionine. ANK repeat units lie at residues 41 to 69 (FGKT…SPNV), 73 to 102 (SGTS…DVNA), 106 to 135 (TGSL…LHHR), and 138 to 165 (SGLT…MMIP).

The protein belongs to the CDKN2 cyclin-dependent kinase inhibitor family. In terms of assembly, interacts with CDK6.

It localises to the nucleus. The protein resides in the cytoplasm. Interacts strongly with CDK4 and CDK6 and inhibits them. The protein is Cyclin-dependent kinase 4 inhibitor D (Cdkn2d) of Mus musculus (Mouse).